The following is a 131-amino-acid chain: Small ribosomal subunit protein bS6 (131 aa).

Residues serine 100–glutamate 131 are disordered. Over residues lysine 104 to phenylalanine 116 the composition is skewed to basic and acidic residues. The segment covering threonine 120–glutamate 131 has biased composition (acidic residues).

It belongs to the bacterial ribosomal protein bS6 family.

Binds together with bS18 to 16S ribosomal RNA. The polypeptide is Small ribosomal subunit protein bS6 (Erwinia tasmaniensis (strain DSM 17950 / CFBP 7177 / CIP 109463 / NCPPB 4357 / Et1/99)).